The primary structure comprises 131 residues: Antiholin (131 aa).

Residues 1–14 (MKMIAWMQHFLETD) are Periplasmic-facing. Cytoplasmic loops occupy residues 1-52 (MKMI…SSFK) and 38-49 (LFAKLNPNIKFS). A helical transmembrane segment spans residues 15–37 (ETKLIYWLTFLMVCMVVDTVLGV). The helical transmembrane segment at 53–75 (IKTGVLIKVSEMILALLAIPFAV) threads the bilayer. At 76-78 (PFP) the chain is on the periplasmic side. A helical transmembrane segment spans residues 79 to 101 (AGLPLLYTVYTALCVSEIYSIFG). Residues 102 to 131 (HLRLVDDKSDFLEILENFFKRTSGKNKEEK) lie on the Cytoplasmic side of the membrane.

The protein belongs to the bacteriophage holin family. phi29likevirus holin subfamily. As to quaternary structure, homomultimer. Interacts with isoform Antiholin; this interaction blocks the holin homomultimerization and delays host cell lysis.

Its subcellular location is the host cell inner membrane. In terms of biological role, accumulates harmlessly in the cytoplasmic membrane until it reaches a critical concentration that triggers the formation of micron-scale pores (holes) causing host cell membrane disruption and endolysin escape into the periplasmic space. Determines the precise timing of host cell lysis. Participates with the endolysin and spanin proteins in the sequential events which lead to the programmed host cell lysis releasing the mature viral particles from the host cell. Its function is as follows. Counteracts the aggregation of the holin molecules and thus of pore formation. This is Antiholin (14) from Bacillus subtilis (Bacteriophage phi-29).